We begin with the raw amino-acid sequence, 167 residues long: Peptidyl-prolyl cis-trans isomerase-like 3 (167 aa).

Residues 1–160 (MSVTLHTTLG…EEVRIERVTV (160 aa)) enclose the PPIase cyclophilin-type domain.

This sequence belongs to the cyclophilin-type PPIase family. PPIL3 subfamily.

The enzyme catalyses [protein]-peptidylproline (omega=180) = [protein]-peptidylproline (omega=0). In terms of biological role, PPIases accelerate the folding of proteins. It catalyzes the cis-trans isomerization of proline imidic peptide bonds in oligopeptides. In Neurospora crassa (strain ATCC 24698 / 74-OR23-1A / CBS 708.71 / DSM 1257 / FGSC 987), this protein is Peptidyl-prolyl cis-trans isomerase-like 3 (cyp-10).